Reading from the N-terminus, the 414-residue chain is MGVSKLDILYRRLLLTKLFIRGWGRPEDLKRLFEFRKMIGNRERCQNLVSSDYPVHIDKIEEQSDCKILDGHFVSPMAHYVPDIMPIESVIARFQFIVPKEWNSKYRPVCIHLAGTGDHHYWRRRTLMARPMIKEARMASLLLENPYYGCRKPKDQVRSSLKNVSDLFVMGGALVLESAALLHWLEREGYGPLGMTGISMGGHMASLAVSNWPKPMPLIPCLSWSTASGVFTTTDSFKMGQEFVKHFTSSADKLTNLNLVSRTLNLDISNQVVSQKPADCHNSSKTSVSATSEGLLLQDTSKMKRFNQTLSTNKSGYTSRNPQSYHLLSKEQSRNSLRKESLIFMKGVMDECTHVANFSVPVDPSLIIVVQAKEDAYIPRTGVRSLQEIWPGCEIRYLEGGHISAYLFKQGLFR.

The N-terminal stretch at 1–24 (MGVSKLDILYRRLLLTKLFIRGWG) is a signal peptide. 2 N-linked (GlcNAc...) asparagine glycosylation sites follow: asparagine 282 and asparagine 307.

It belongs to the AB hydrolase superfamily.

It localises to the secreted. In Homo sapiens (Human), this protein is Protein ABHD18.